Reading from the N-terminus, the 118-residue chain is Ribonuclease P protein component 2 (118 aa).

The protein belongs to the eukaryotic/archaeal RNase P protein component 2 family. As to quaternary structure, consists of a catalytic RNA component and at least 4-5 protein subunits.

The protein resides in the cytoplasm. It catalyses the reaction Endonucleolytic cleavage of RNA, removing 5'-extranucleotides from tRNA precursor.. Part of ribonuclease P, a protein complex that generates mature tRNA molecules by cleaving their 5'-ends. This chain is Ribonuclease P protein component 2, found in Pyrococcus abyssi (strain GE5 / Orsay).